We begin with the raw amino-acid sequence, 309 residues long: MTDSLTHTSPFLVAALYHFVSVPRFADLQAPLQTLCEENGVKGTLLLAHEGINGTIAGPDAGIHAVLAFLRAQPEFSGLEHKESRASKMPFLRMKVKLKKEIVTMGVEDIDPNKVVGTYVAAKDWNTLISDPDTIVIDTRNDYETAIGTFRGALDPKTKSFREFPEWVRQNPGLHNKPKVAMYCTGGIRCEKATAFMKAEGFDEVYHLKGGILKYLEEVPQEESLWDGACFVFDERVSVEHGLKEGEHRLCHACRNPITAEETTSPLYEEGVSCSHCYHTRTEEDRLRYRQRQHQIALAKKRGQRHIGS.

In terms of domain architecture, Rhodanese spans 130 to 224 (SDPDTIVIDT…YLEEVPQEES (95 aa)). Catalysis depends on C184, which acts as the Cysteine persulfide intermediate.

It belongs to the TrhO family.

The enzyme catalyses uridine(34) in tRNA + AH2 + O2 = 5-hydroxyuridine(34) in tRNA + A + H2O. In terms of biological role, catalyzes oxygen-dependent 5-hydroxyuridine (ho5U) modification at position 34 in tRNAs. In Rhizobium johnstonii (strain DSM 114642 / LMG 32736 / 3841) (Rhizobium leguminosarum bv. viciae), this protein is tRNA uridine(34) hydroxylase.